Consider the following 332-residue polypeptide: Ribose operon repressor (332 aa).

Residues 2 to 56 (ATMKDIARLAQVSTSTVSHVINGSRFVSDEIREKVMRIVAELNYTPSAVARSLKV) form the HTH lacI-type domain. Residues 4 to 23 (MKDIARLAQVSTSTVSHVIN) constitute a DNA-binding region (H-T-H motif).

Its function is as follows. Transcriptional repressor for the ribose rbsDACBK operon. The sequence is that of Ribose operon repressor (rbsR) from Haemophilus influenzae (strain ATCC 51907 / DSM 11121 / KW20 / Rd).